The chain runs to 37 residues: Large ribosomal subunit protein bL36 (37 aa).

This sequence belongs to the bacterial ribosomal protein bL36 family.

The protein is Large ribosomal subunit protein bL36 of Nitratiruptor sp. (strain SB155-2).